We begin with the raw amino-acid sequence, 1040 residues long: Contactin-2 (1040 aa).

The N-terminal stretch at 1-30 is a signal peptide; that stretch reads MGAPARKRASLLLLLLATMALVSSPGWSFS. Ig-like C2-type domains lie at 39–130, 135–224, 241–324, 329–413, 419–506, and 511–605; these read PVFE…AVLR, QEFS…SVFS, PSIK…GRII, PEWL…AELA, PDFR…GILS, and TKIT…ATVL. Cystine bridges form between Cys-63–Cys-113, Cys-157–Cys-209, Cys-263–Cys-308, and Cys-350–Cys-397. 3 N-linked (GlcNAc...) asparagine glycosylation sites follow: Asn-78, Asn-200, and Asn-206. Asn-463, Asn-479, Asn-500, and Asn-527 each carry an N-linked (GlcNAc...) asparagine glycan. Fibronectin type-III domains are found at residues 612-710, 715-812, 817-913, and 917-1008; these read PPGG…TKEA, APSG…SAEE, APAK…MKPP, and PPGN…NGGT. The N-linked (GlcNAc...) asparagine glycan is linked to Asn-777. Residues 796 to 798 carry the Cell attachment site motif; it reads RGD. N-linked (GlcNAc...) asparagine glycans are attached at residues Asn-832, Asn-920, and Asn-942. The tract at residues 897-922 is disordered; that stretch reads GTGPASPSADAMTMKPPPRRPPGNIS. Ser-1014 carries the GPI-anchor amidated serine lipid modification. Positions 1015–1040 are cleaved as a propeptide — removed in mature form; it reads SAVRPAHPGPVFSCMVILMLAGCQRL.

The protein belongs to the immunoglobulin superfamily. Contactin family.

The protein resides in the cell membrane. In conjunction with another transmembrane protein, CNTNAP2, contributes to the organization of axonal domains at nodes of Ranvier by maintaining voltage-gated potassium channels at the juxtaparanodal region. The protein is Contactin-2 (Cntn2) of Mus musculus (Mouse).